The sequence spans 471 residues: 7-hydroxymethyl chlorophyll a reductase, chloroplastic (471 aa).

Residues 1–44 constitute a chloroplast transit peptide; the sequence is MARCISFLSTSSSLPCATKPPCCSVSSVLPSSPSSHQCRGRKTS.

This sequence belongs to the FrhB family. Requires FAD as cofactor. Iron-sulfur cluster serves as cofactor.

The protein localises to the plastid. It is found in the chloroplast. The enzyme catalyses chlorophyll a + 2 oxidized [2Fe-2S]-[ferredoxin] + H2O = 7(1)-hydroxychlorophyll a + 2 reduced [2Fe-2S]-[ferredoxin] + 2 H(+). Probable iron-sulfur flavoprotein that converts 7-hydroxymethyl chlorophyll a to chlorophyll a using ferredoxin as a reducing equivalent. Catalyzes the reduction of a hydroxymethyl group to a methyl group. The polypeptide is 7-hydroxymethyl chlorophyll a reductase, chloroplastic (HCAR) (Oryza sativa subsp. japonica (Rice)).